The following is a 271-amino-acid chain: Formamidopyrimidine-DNA glycosylase (271 aa).

Catalysis depends on P2, which acts as the Schiff-base intermediate with DNA. Residue E3 is the Proton donor of the active site. K58 serves as the catalytic Proton donor; for beta-elimination activity. Positions 91, 110, and 152 each coordinate DNA. Residues 237–271 (QIYGRSAHPCPICGTPIRLERIGQRASYYCTQCQH) form an FPG-type zinc finger. R261 serves as the catalytic Proton donor; for delta-elimination activity.

It belongs to the FPG family. As to quaternary structure, monomer. Zn(2+) serves as cofactor.

The catalysed reaction is Hydrolysis of DNA containing ring-opened 7-methylguanine residues, releasing 2,6-diamino-4-hydroxy-5-(N-methyl)formamidopyrimidine.. It carries out the reaction 2'-deoxyribonucleotide-(2'-deoxyribose 5'-phosphate)-2'-deoxyribonucleotide-DNA = a 3'-end 2'-deoxyribonucleotide-(2,3-dehydro-2,3-deoxyribose 5'-phosphate)-DNA + a 5'-end 5'-phospho-2'-deoxyribonucleoside-DNA + H(+). In terms of biological role, involved in base excision repair of DNA damaged by oxidation or by mutagenic agents. Acts as a DNA glycosylase that recognizes and removes damaged bases. Has a preference for oxidized purines, such as 7,8-dihydro-8-oxoguanine (8-oxoG). Has AP (apurinic/apyrimidinic) lyase activity and introduces nicks in the DNA strand. Cleaves the DNA backbone by beta-delta elimination to generate a single-strand break at the site of the removed base with both 3'- and 5'-phosphates. This is Formamidopyrimidine-DNA glycosylase from Nitrosococcus oceani (strain ATCC 19707 / BCRC 17464 / JCM 30415 / NCIMB 11848 / C-107).